The primary structure comprises 383 residues: Cytochrome b (383 aa).

4 consecutive transmembrane segments (helical) span residues 35 to 55, 79 to 100, 115 to 135, and 180 to 200; these read FGSI…ILSM, WLFR…YIHI, WGIG…GYVL, and FFSL…LHLF. 2 residues coordinate heme b: His-85 and His-99. Positions 184 and 198 each coordinate heme b. His-203 provides a ligand contact to a ubiquinone. The next 4 helical transmembrane spans lie at 228 to 248, 290 to 310, 321 to 341, and 348 to 368; these read IKDL…NFQF, LGGV…IFYN, LNKI…WLGK, and FTNI…LNFY.

This sequence belongs to the cytochrome b family. In terms of assembly, the main subunits of complex b-c1 are: cytochrome b, cytochrome c1 and the Rieske protein. Heme b serves as cofactor.

The protein localises to the mitochondrion inner membrane. In terms of biological role, component of the ubiquinol-cytochrome c reductase complex (complex III or cytochrome b-c1 complex) that is part of the mitochondrial respiratory chain. The b-c1 complex mediates electron transfer from ubiquinol to cytochrome c. Contributes to the generation of a proton gradient across the mitochondrial membrane that is then used for ATP synthesis. This Apis mellifera ligustica (Common honeybee) protein is Cytochrome b (MT-CYB).